The sequence spans 414 residues: MTMTKQSSLSPGSRLYDYTTQDGAAWRVSALKEVSYDVVVQPRLLDPANPALADALSSGTTPARRLIVIDATVRSLYGEQLAAYLAGHDVEFHLCVIDAHESAKVMETVFEVVDAMDAFGVPRRHAPVLAMGGGVLTDIVGLAASLYRRATPYVRIPTTLIGMIDAGIGAKTGVNFREHKNRLGTYHPSSLTLIDPGFLATLDARHLRNGLAEILKVALVKDAELFDLLEGHGASLVEQRMQPGEGGTGGAALTVLRRAVQGMLEELQPNLWEHQLRRLVDFGHSFSPSVEMAALPELLHGEAVCIDMALSSVLAHHRGLLTEAELGRVLDVMRLLHLPVLHPVCTPDLMRAALADTVKHRDGWQHMPLPRGIGDAVFVNDVTQREIEAALLTLAERDRVPRWRALHGAVDMGV.

NAD(+)-binding positions include D70, 101–104, 134–138, 158–159, K171, K180, and 198–201; these read ESAK, GVLTD, TT, and FLAT. Residue K171 is part of the active site. Zn(2+) contacts are provided by E213, H284, and H300.

Belongs to the sugar phosphate cyclases superfamily. EEVS family. NAD(+) serves as cofactor. It depends on Zn(2+) as a cofactor.

The catalysed reaction is D-sedoheptulose 7-phosphate = 2-epi-5-epi-valiolone + phosphate. It participates in antibiotic biosynthesis. In terms of biological role, catalyzes the cyclization of D-sedoheptulose 7-phosphate to 2-epi-5-epi-valiolone. Involved in validamycin biosynthesis. The protein is 2-epi-5-epi-valiolone synthase of Streptomyces hygroscopicus subsp. jinggangensis (strain 5008).